A 547-amino-acid chain; its full sequence is DNA polymerase kappa (547 aa).

Residues 18 to 39 (LTIEDDGSSSSDEEATLKRRLA) are disordered. Positions 20–31 (IEDDGSSSSDEE) are enriched in acidic residues. The UmuC domain occupies 132–316 (IVHVDCDAFY…LPVREVSGIG (185 aa)). Residues D136 and D226 each contribute to the Mg(2+) site. Residues 489 to 518 (TVPCPVCQKNIENELGILNQHVDLCLNVET) form a UBZ4-type zinc finger. Zn(2+) contacts are provided by C492, C495, H509, and C513.

In terms of assembly, interacts with hus1 and rad17.

The protein localises to the cytoplasm. The protein resides in the nucleus. The catalysed reaction is DNA(n) + a 2'-deoxyribonucleoside 5'-triphosphate = DNA(n+1) + diphosphate. In terms of biological role, DNA polymerase specifically involved in DNA repair. Plays an important role in translesion synthesis, where the normal high-fidelity DNA polymerases cannot proceed and DNA synthesis stalls. Has a role in meiosis. The sequence is that of DNA polymerase kappa (mug40) from Schizosaccharomyces pombe (strain 972 / ATCC 24843) (Fission yeast).